Consider the following 95-residue polypeptide: Aspartyl/glutamyl-tRNA(Asn/Gln) amidotransferase subunit C (95 aa).

It belongs to the GatC family. Heterotrimer of A, B and C subunits.

The enzyme catalyses L-glutamyl-tRNA(Gln) + L-glutamine + ATP + H2O = L-glutaminyl-tRNA(Gln) + L-glutamate + ADP + phosphate + H(+). It catalyses the reaction L-aspartyl-tRNA(Asn) + L-glutamine + ATP + H2O = L-asparaginyl-tRNA(Asn) + L-glutamate + ADP + phosphate + 2 H(+). In terms of biological role, allows the formation of correctly charged Asn-tRNA(Asn) or Gln-tRNA(Gln) through the transamidation of misacylated Asp-tRNA(Asn) or Glu-tRNA(Gln) in organisms which lack either or both of asparaginyl-tRNA or glutaminyl-tRNA synthetases. The reaction takes place in the presence of glutamine and ATP through an activated phospho-Asp-tRNA(Asn) or phospho-Glu-tRNA(Gln). The sequence is that of Aspartyl/glutamyl-tRNA(Asn/Gln) amidotransferase subunit C from Chlorobium phaeobacteroides (strain DSM 266 / SMG 266 / 2430).